The sequence spans 280 residues: F-actin-capping protein subunit alpha (280 aa).

The protein belongs to the F-actin-capping protein alpha subunit family. As to quaternary structure, heterodimer of an alpha and a beta subunit.

The protein localises to the cytoplasm. It localises to the cytoskeleton. Its function is as follows. F-actin-capping proteins bind in a Ca(2+)-independent manner to the fast growing ends of actin filaments (barbed end) thereby blocking the exchange of subunits at these ends. Unlike other capping proteins (such as gelsolin and severin), these proteins do not sever actin filaments. This is F-actin-capping protein subunit alpha (CAP01) from Candida albicans (strain SC5314 / ATCC MYA-2876) (Yeast).